The chain runs to 578 residues: Suppressor of smlA (578 aa).

In terms of biological role, involved in regulation of group size of aggregation streams. The protein is Suppressor of smlA (sslA1) of Dictyostelium discoideum (Social amoeba).